Consider the following 333-residue polypeptide: tRNA-modifying protein YgfZ (333 aa).

Folate-binding residues include Trp33 and Trp195.

The protein belongs to the tRNA-modifying YgfZ family.

Its subcellular location is the cytoplasm. Its function is as follows. Folate-binding protein involved in regulating the level of ATP-DnaA and in the modification of some tRNAs. It is probably a key factor in regulatory networks that act via tRNA modification, such as initiation of chromosomal replication. This is tRNA-modifying protein YgfZ from Pectobacterium atrosepticum (strain SCRI 1043 / ATCC BAA-672) (Erwinia carotovora subsp. atroseptica).